The primary structure comprises 210 residues: Orotate phosphoribosyltransferase (210 aa).

Residues arginine 94, lysine 98, histidine 100, and 120–128 (EDLISTGGS) contribute to the 5-phospho-alpha-D-ribose 1-diphosphate site. Position 124 (serine 124) interacts with orotate.

It belongs to the purine/pyrimidine phosphoribosyltransferase family. PyrE subfamily. As to quaternary structure, homodimer. Mg(2+) serves as cofactor.

It catalyses the reaction orotidine 5'-phosphate + diphosphate = orotate + 5-phospho-alpha-D-ribose 1-diphosphate. It functions in the pathway pyrimidine metabolism; UMP biosynthesis via de novo pathway; UMP from orotate: step 1/2. Its function is as follows. Catalyzes the transfer of a ribosyl phosphate group from 5-phosphoribose 1-diphosphate to orotate, leading to the formation of orotidine monophosphate (OMP). This is Orotate phosphoribosyltransferase from Bacillus cereus (strain ATCC 14579 / DSM 31 / CCUG 7414 / JCM 2152 / NBRC 15305 / NCIMB 9373 / NCTC 2599 / NRRL B-3711).